We begin with the raw amino-acid sequence, 122 residues long: MIQTESRLEVADNTGAREVMCIKVLGGSKRRYAGIGDVIKVTVKVAAPRGRVKKGEIYNAVVVRTAKGVRRQDGSLVKFDSNAAVLLNAKLEPIGTRIFGPVTRELRTERFMKIVSLAPEVL.

The protein belongs to the universal ribosomal protein uL14 family. As to quaternary structure, part of the 50S ribosomal subunit. Forms a cluster with proteins L3 and L19. In the 70S ribosome, L14 and L19 interact and together make contacts with the 16S rRNA in bridges B5 and B8.

In terms of biological role, binds to 23S rRNA. Forms part of two intersubunit bridges in the 70S ribosome. In Herminiimonas arsenicoxydans, this protein is Large ribosomal subunit protein uL14.